Reading from the N-terminus, the 1353-residue chain is MSSLSAPPGGCGGDVAAAPATATSTATATATATATATATGSMEPAMVPRTANLLACKQWWRVCFLYGDQQKYYRQLYSKAAAQRLAGANQENDNAARGAGAGEGEGQEYDTVAMGDGDFIAAQLDAGEDVDDGIDLGDSSQPGGGATPTATATAGRPLFPLSSSPRRSKKLLRSLRAHVKGESRPEKPAKAAKPQSEPSSELTKRNARVTVLDDPFLFGIDADHLGDLVRGKQYSPLEATENIAKFYELQLETTEATAQVLEIIEQEEEPPEPPKPALPPKQKQPRPVPPLPARITQPAVLQPLTAGDLQFLNLSLRHRSLPRSMKPFKDPHDISFTFNELDTSTSATAAAAAAAVAAADVATGVGVGSSQQESNEPISRTPLTQISYLQKIPTLPRHFSPSGCPQGLPPPPALAGCGSALGLPSSSSASALYAAQNGGMLPTSPLPLQRHQQYLPPHHQQLPPLGAGPGQGQGHGLALGPGGAGLPQYSPAVSGCSSTAKYSNAQLPPHHHQLSPALSTPSPPSLLHHPAAGTSASAHAPFLAGPHMDMQRQSHSDDDSGCALEEYTWVPPGLRPDQVRLYFSQIPDDKVPYVNSPGEQYRVRQLLHQLPPHDNEVRYCHSLTDEERKELRLFSTQRKRDALGRGNVRQLMSARPCDGCDELISTGDIAVFATRLGPNASWHPACFTCCICRELLVDLIYFHRDGRMYCGRHHAETLKPRCSACDEIILADECTEAEGRAWHMNHFACHECDKQLGGQRYIMREGKPYCLHCFDAMFAEYCDYCGEAIGVDQGQMSHDGQHWHATDECFSCNTCRCSLLGRAFLPRRGAIYCSIACSKGEPPTPSDSSGTGMYTTPTPPTQRVRPQTRITSSHASSSPPMSPQQQQQHQASFNQAMYQLQTQQLEAAGGPVSQSQSYATSDSDAGVVKDLEHCRSGDHAGGGDFTDFSGGRASSTSHNMSPLNSPGDFQPHLMPKPMELQRDGVYNFNEMSSNLDTAWPAKPPLGATHSYQLQRQLMENQHTSSMPELAGKGPMLQHQMAAHFGQQPALHSSAQQFQHEYADIMHPPPPPPERGAVGEVPELPTPNLSVASTALPPELMGSPTHSAGDRSLNTPLSAHSATHGPTHPVSILSGASSSSPMSGEPAKKKGVRFEGIPDTLPRSRSYSGNGAGTSGGGDKDRDRDRERDRDRDRDKGGDKDRESGRHGPGHSSRRRRRRKSTSSTSSGNHHRSGSGHRSHSTTRADTYAPAQPLSSSYQGPPSVLQADSETAHKSPRQQREREREESAEESDVCSTCSSSSSSSEDYMMMYQLPQRRHYGGVRVSYVPNDALAYDRKRKPAEMAGDKDKNCIIS.

Disordered regions lie at residues 130–206 (VDDG…TKRN), 266–292 (QEEE…PPLP), and 500–540 (AKYS…SAHA). Over residues 147-165 (TPTATATAGRPLFPLSSSP) the composition is skewed to low complexity. Residues 166–178 (RRSKKLLRSLRAH) show a composition bias toward basic residues. Over residues 179-189 (VKGESRPEKPA) the composition is skewed to basic and acidic residues. Residues 514–532 (LSPALSTPSPPSLLHHPAA) show a composition bias toward low complexity. Residues 548–656 (MDMQRQSHSD…NVRQLMSARP (109 aa)) enclose the PET domain. 3 consecutive LIM zinc-binding domains span residues 655–719 (RPCD…ETLK), 720–780 (PRCS…MFAE), and 781–843 (YCDY…GEPP). 3 disordered regions span residues 840–892 (GEPP…HQAS), 933–962 (HCRS…NMSP), and 1062–1303 (ADIM…SSSS). The span at 861–892 (TQRVRPQTRITSSHASSSPPMSPQQQQQHQAS) shows a compositional bias: low complexity. 2 stretches are compositionally biased toward polar residues: residues 952-962 (RASSTSHNMSP) and 1111-1120 (SLNTPLSAHS). The span at 1130 to 1142 (SILSGASSSSPMS) shows a compositional bias: low complexity. The segment covering 1177 to 1205 (GDKDRDRDRERDRDRDRDKGGDKDRESGR) has biased composition (basic and acidic residues). Composition is skewed to basic residues over residues 1207–1220 (GPGH…RRKS) and 1228–1240 (NHHR…RSHS). Positions 1269 to 1284 (ETAHKSPRQQRERERE) are enriched in basic and acidic residues.

It belongs to the prickle / espinas / testin family. Interacts with dsh; PET and LIM domains interact with dsh DEP domain, in wing cells. Interacts with Vang in photoreceptor cells.

Its subcellular location is the cell membrane. Its function is as follows. Acts in a planar cell polarity (PCP) complex; polarization along the apical/basal axis of epithelial cells. PCP signaling in the wing disk requires the receptor fz and the cytoplasmic proteins dsh and pk. These act in a feedback loop leading to activation of the jnk cascade and subsequent polarized arrangement of hairs and bristles. Dgo and pk compete with one another for dsh binding, thereby modulating fz dsh activity and ensuring tight control over fz PCP signaling. Vang, stan and pk function together to regulate the establishment of tissue polarity in the adult eye. This Drosophila pseudoobscura pseudoobscura (Fruit fly) protein is Protein prickle.